A 561-amino-acid chain; its full sequence is Amidophosphoribosyltransferase 2, chloroplastic (561 aa).

A compositionally biased stretch (low complexity) spans 1–27 (MAATSSISSSLSLNAKPNKLSNNNNNN). The segment at 1–36 (MAATSSISSSLSLNAKPNKLSNNNNNNKPHRFLRNP) is disordered. The transit peptide at 1–53 (MAATSSISSSLSLNAKPNKLSNNNNNNKPHRFLRNPFLNPSSSSFSPLPASIS) directs the protein to the chloroplast. Cys-87 acts as the Nucleophile in catalysis. The Glutamine amidotransferase type-2 domain maps to 87–307 (CGVVGIYGDS…PGEVLVVDKD (221 aa)). [4Fe-4S] cluster contacts are provided by Cys-323, Cys-469, Cys-520, and Cys-523.

This sequence in the C-terminal section; belongs to the purine/pyrimidine phosphoribosyltransferase family. [4Fe-4S] cluster serves as cofactor. The cofactor is Mg(2+). In terms of tissue distribution, mostly expressed in leaves, and, to a lower extent, in cotyledons.

It is found in the plastid. Its subcellular location is the chloroplast stroma. It carries out the reaction 5-phospho-beta-D-ribosylamine + L-glutamate + diphosphate = 5-phospho-alpha-D-ribose 1-diphosphate + L-glutamine + H2O. The protein operates within purine metabolism; IMP biosynthesis via de novo pathway; N(1)-(5-phospho-D-ribosyl)glycinamide from 5-phospho-alpha-D-ribose 1-diphosphate: step 1/2. Its activity is regulated as follows. Inhibited by the phenyltriazole acetic acid compound [5-(4-chlorophenyl)-1-isopropyl-1H-[1,2,4]triazol-3-yl]-acetic acid (DAS734), a bleaching herbicide. In terms of biological role, catalyzes the first committed step of 'de novo purine biosynthesis from glutamine. Required for chloroplast biogenesis and cell division. Confers sensitivity to the phenyltriazole acetic acid compound [5-(4-chlorophenyl)-1-isopropyl-1H-[1,2,4]triazol-3-yl]-acetic acid (DAS734), a bleaching herbicide. The protein is Amidophosphoribosyltransferase 2, chloroplastic (ASE2) of Arabidopsis thaliana (Mouse-ear cress).